A 122-amino-acid chain; its full sequence is Large ribosomal subunit protein uL14 (122 aa).

The protein belongs to the universal ribosomal protein uL14 family. As to quaternary structure, part of the 50S ribosomal subunit. Forms a cluster with proteins L3 and L19. In the 70S ribosome, L14 and L19 interact and together make contacts with the 16S rRNA in bridges B5 and B8.

Functionally, binds to 23S rRNA. Forms part of two intersubunit bridges in the 70S ribosome. The sequence is that of Large ribosomal subunit protein uL14 from Rippkaea orientalis (strain PCC 8801 / RF-1) (Cyanothece sp. (strain PCC 8801)).